Consider the following 312-residue polypeptide: uncharacterized protein (312 aa).

112–118 (LIGLPMV) contacts ATP.

The protein belongs to the MurCDEF family.

This is an uncharacterized protein from Methanothermobacter thermautotrophicus (strain ATCC 29096 / DSM 1053 / JCM 10044 / NBRC 100330 / Delta H) (Methanobacterium thermoautotrophicum).